The sequence spans 520 residues: Phosphoenolpyruvate carboxykinase (ATP) (520 aa).

Residues Arg-61, Phe-196, and Lys-202 each contribute to the substrate site. ATP contacts are provided by residues Lys-202, His-222, and Gly-238–Thr-246. Residues Lys-202 and His-222 each contribute to the Mn(2+) site. Position 259 (Asp-259) interacts with Mn(2+). ATP-binding positions include Glu-287, Arg-324, Arg-443–Ile-444, and Thr-449. Arg-324 is a substrate binding site.

This sequence belongs to the phosphoenolpyruvate carboxykinase (ATP) family. Mn(2+) is required as a cofactor.

It localises to the cytoplasm. It catalyses the reaction oxaloacetate + ATP = phosphoenolpyruvate + ADP + CO2. Its pathway is carbohydrate biosynthesis; gluconeogenesis. Its function is as follows. Involved in the gluconeogenesis. Catalyzes the conversion of oxaloacetate (OAA) to phosphoenolpyruvate (PEP) through direct phosphoryl transfer between the nucleoside triphosphate and OAA. This is Phosphoenolpyruvate carboxykinase (ATP) from Amoebophilus asiaticus (strain 5a2).